Here is a 290-residue protein sequence, read N- to C-terminus: ATP synthase gamma chain (290 aa).

Belongs to the ATPase gamma chain family. In terms of assembly, F-type ATPases have 2 components, CF(1) - the catalytic core - and CF(0) - the membrane proton channel. CF(1) has five subunits: alpha(3), beta(3), gamma(1), delta(1), epsilon(1). CF(0) has three main subunits: a, b and c.

Its subcellular location is the cell membrane. In terms of biological role, produces ATP from ADP in the presence of a proton gradient across the membrane. The gamma chain is believed to be important in regulating ATPase activity and the flow of protons through the CF(0) complex. The sequence is that of ATP synthase gamma chain from Buchnera aphidicola subsp. Diuraphis noxia.